Reading from the N-terminus, the 245-residue chain is 1-(5-phosphoribosyl)-5-[(5-phosphoribosylamino)methylideneamino] imidazole-4-carboxamide isomerase (245 aa).

Asp8 functions as the Proton acceptor in the catalytic mechanism. Asp130 functions as the Proton donor in the catalytic mechanism.

The protein belongs to the HisA/HisF family.

The protein resides in the cytoplasm. It carries out the reaction 1-(5-phospho-beta-D-ribosyl)-5-[(5-phospho-beta-D-ribosylamino)methylideneamino]imidazole-4-carboxamide = 5-[(5-phospho-1-deoxy-D-ribulos-1-ylimino)methylamino]-1-(5-phospho-beta-D-ribosyl)imidazole-4-carboxamide. The protein operates within amino-acid biosynthesis; L-histidine biosynthesis; L-histidine from 5-phospho-alpha-D-ribose 1-diphosphate: step 4/9. The polypeptide is 1-(5-phosphoribosyl)-5-[(5-phosphoribosylamino)methylideneamino] imidazole-4-carboxamide isomerase (Pseudomonas putida (strain ATCC 700007 / DSM 6899 / JCM 31910 / BCRC 17059 / LMG 24140 / F1)).